The primary structure comprises 413 residues: Serine hydroxymethyltransferase (413 aa).

(6S)-5,6,7,8-tetrahydrofolate-binding positions include Leu-117 and 121-123 (GHL). Lys-226 carries the N6-(pyridoxal phosphate)lysine modification. Position 349–351 (349–351 (SPF)) interacts with (6S)-5,6,7,8-tetrahydrofolate.

The protein belongs to the SHMT family. In terms of assembly, homodimer. Pyridoxal 5'-phosphate serves as cofactor.

It localises to the cytoplasm. It carries out the reaction (6R)-5,10-methylene-5,6,7,8-tetrahydrofolate + glycine + H2O = (6S)-5,6,7,8-tetrahydrofolate + L-serine. It functions in the pathway one-carbon metabolism; tetrahydrofolate interconversion. The protein operates within amino-acid biosynthesis; glycine biosynthesis; glycine from L-serine: step 1/1. Its function is as follows. Catalyzes the reversible interconversion of serine and glycine with tetrahydrofolate (THF) serving as the one-carbon carrier. This reaction serves as the major source of one-carbon groups required for the biosynthesis of purines, thymidylate, methionine, and other important biomolecules. Also exhibits THF-independent aldolase activity toward beta-hydroxyamino acids, producing glycine and aldehydes, via a retro-aldol mechanism. The protein is Serine hydroxymethyltransferase of Listeria welshimeri serovar 6b (strain ATCC 35897 / DSM 20650 / CCUG 15529 / CIP 8149 / NCTC 11857 / SLCC 5334 / V8).